The chain runs to 192 residues: Adenine phosphoribosyltransferase 2 (192 aa).

The protein belongs to the purine/pyrimidine phosphoribosyltransferase family. In terms of assembly, homodimer.

Its subcellular location is the cytoplasm. It carries out the reaction AMP + diphosphate = 5-phospho-alpha-D-ribose 1-diphosphate + adenine. The protein operates within purine metabolism; AMP biosynthesis via salvage pathway; AMP from adenine: step 1/1. In terms of biological role, catalyzes a salvage reaction resulting in the formation of AMP, that is energically less costly than de novo synthesis. May contribute to the recycling of adenine into adenylate nucleotides and the inactivation of cytokinins by phosphoribosylation. Possesses low activity toward adenine and cytokinins. The polypeptide is Adenine phosphoribosyltransferase 2 (APT2) (Arabidopsis thaliana (Mouse-ear cress)).